We begin with the raw amino-acid sequence, 342 residues long: Sideroflexin-5 (342 aa).

Residues 1-24 show a composition bias toward low complexity; it reads MADTATTASAASAAASASNASSDA. Positions 1–29 are disordered; sequence MADTATTASAASAAASASNASSDAPPFQL. A run of 4 helical transmembrane segments spans residues 105–125, 165–185, 256–276, and 289–309; these read IFMP…VVGL, FIQG…GLNV, LTRV…MSML, and LLPV…PLAI.

The protein belongs to the sideroflexin family. In terms of tissue distribution, specifically expressed in the brain.

Its subcellular location is the mitochondrion inner membrane. The catalysed reaction is citrate(in) = citrate(out). Its function is as follows. Mitochondrial amino-acid transporter. Transports citrate. Does not act as a serine transporter: not able to mediate transport of serine into mitochondria. In brown adipose tissue, plays a role in the regulation of UCP1-dependent thermogenesis probably by supporting mitochondrial glycerol-3-phosphate utilization. This Rattus norvegicus (Rat) protein is Sideroflexin-5.